A 535-amino-acid chain; its full sequence is Heat shock factor protein 2 (535 aa).

Glycyl lysine isopeptide (Lys-Gly) (interchain with G-Cter in SUMO2) cross-links involve residues Lys-2, Lys-82, Lys-135, Lys-139, Lys-151, Lys-210, Lys-218, and Lys-237. Residues 7–112 mediate DNA binding; that stretch reads VPAFLSKLWT…LLENIKRKVS (106 aa). The hydrophobic repeat HR-A/B stretch occupies residues 119-192; that stretch reads NKIRQEDLTK…VTLVQNNQLV (74 aa). Positions 298–325 are disordered; that stretch reads QSGEQSEPAREPLRVGSAGSSSPLMSSA. Over residues 313-325 the composition is skewed to low complexity; sequence GSAGSSSPLMSSA. The hydrophobic repeat HR-C stretch occupies residues 359 to 384; sequence LLDYLDSIDCSLEDFQAMLSGRQFSI. The interval 418 to 437 is disordered; that stretch reads TKSSVVQHVSEEGRKSKSKP. Basic and acidic residues predominate over residues 426 to 437; that stretch reads VSEEGRKSKSKP.

This sequence belongs to the HSF family. In terms of assembly, DNA-binding homotrimer in stressed or heat shocked cells, otherwise found as a homodimer. Isoform alpha is expressed predominantly in testis while isoform beta is expressed predominantly in heart and brain.

The protein resides in the cytoplasm. Its subcellular location is the nucleus. Functionally, DNA-binding protein that specifically binds heat shock promoter elements (HSE) and activates transcription. In higher eukaryotes, HSF is unable to bind to the HSE unless the cells are heat shocked. HSF2 is expressed in a form that binds DNA constitutively but loses DNA binding by incubation at greater than 41 degrees C. This is Heat shock factor protein 2 (Hsf2) from Mus musculus (Mouse).